Here is a 982-residue protein sequence, read N- to C-terminus: Coatomer subunit beta (982 aa).

HEAT repeat units lie at residues S16–P53, E130–E167, Y241–A278, and L317–S352.

Oligomeric complex that consists of at least the alpha, beta, beta', gamma, delta, epsilon and zeta subunits.

The protein resides in the cytoplasm. It is found in the golgi apparatus membrane. It localises to the cytoplasmic vesicle. Its subcellular location is the COPI-coated vesicle membrane. In terms of biological role, the coatomer is a cytosolic protein complex that binds to dilysine motifs and reversibly associates with Golgi non-clathrin-coated vesicles, which further mediate biosynthetic protein transport from the ER, via the Golgi up to the trans Golgi network. Coatomer complex is required for budding from Golgi membranes, and is essential for the retrograde Golgi-to-ER transport of dilysine-tagged proteins. The polypeptide is Coatomer subunit beta (Trypanosoma brucei brucei).